A 1255-amino-acid chain; its full sequence is Cilia- and flagella-associated protein 337 B (1255 aa).

Positions Lys87–Val122 constitute an EF-hand domain. Ca(2+) is bound by residues Asp100, Asn102, Asn104, and Glu111. WD repeat units lie at residues Asp228–Ala269, Glu282–Glu322, Ala326–Val365, Glu368–Lys407, Gly410–Cys449, Val496–Ser536, Val538–Ala577, Lys580–Glu624, Leu625–Ser664, Thr669–Gln708, Gln769–Glu808, and Ala844–Gln883. Disordered regions lie at residues Ile941–Pro988 and Gln1140–Gly1160. The span at Thr953–Gln969 shows a compositional bias: low complexity. Residues Thr1148–Gly1160 are compositionally biased toward polar residues.

Belongs to the CFAP337 family. Associates with components of the nexin-dynein regulatory complex (N-DRC) and the CFAP184:CFAP263 complex.

It is found in the cell projection. It localises to the cilium. In terms of biological role, associates with components of the nexin-dynein regulatory complex (N-DRC), a key regulator of ciliary/flagellar motility, and might act as an inner dynein arm (IDA) hub or linkage. This chain is Cilia- and flagella-associated protein 337 B, found in Tetrahymena thermophila (strain SB210).